The primary structure comprises 666 residues: ESX-1 secretion-associated protein EspI (666 aa).

The segment covering 1–15 (MAADYDKLFRPHEGM) has biased composition (basic and acidic residues). A disordered region spans residues 1 to 378 (MAADYDKLFR…ATKPPKVVSQ (378 aa)). The span at 22–31 (AAQPFFDPSA) shows a compositional bias: low complexity. Pro residues-rich tracts occupy residues 64-80 (APPP…PTPM), 87-144 (PPSP…PAPT), and 188-205 (PAPP…PAPS). A compositionally biased stretch (basic residues) spans 222–231 (HSRRARRGHR). Positions 284 to 297 (PTRPAPTEPPPSPS) are enriched in pro residues. Residues 357–371 (PKVKKVKPQKPKATK) are compositionally biased toward basic residues. 424–431 (LKGGAGKT) serves as a coordination point for ATP.

In terms of biological role, required to repress ESX-1-mediated secretion under low ATP conditions. This function requires the ATP-binding motif. In Mycobacterium tuberculosis (strain CDC 1551 / Oshkosh), this protein is ESX-1 secretion-associated protein EspI.